Here is a 165-residue protein sequence, read N- to C-terminus: Ribosome maturation factor RimM (165 aa).

The 73-residue stretch at 89 to 161 folds into the PRC barrel domain; the sequence is EADTHYIVDL…KIVVKPVRQW (73 aa).

The protein belongs to the RimM family. Binds ribosomal protein uS19.

The protein localises to the cytoplasm. In terms of biological role, an accessory protein needed during the final step in the assembly of 30S ribosomal subunit, possibly for assembly of the head region. Essential for efficient processing of 16S rRNA. May be needed both before and after RbfA during the maturation of 16S rRNA. It has affinity for free ribosomal 30S subunits but not for 70S ribosomes. In Clostridium botulinum (strain Alaska E43 / Type E3), this protein is Ribosome maturation factor RimM.